The following is a 1360-amino-acid chain: DNA-directed RNA polymerase subunit beta (1360 aa).

It belongs to the RNA polymerase beta chain family. As to quaternary structure, the RNAP catalytic core consists of 2 alpha, 1 beta, 1 beta' and 1 omega subunit. When a sigma factor is associated with the core the holoenzyme is formed, which can initiate transcription.

It carries out the reaction RNA(n) + a ribonucleoside 5'-triphosphate = RNA(n+1) + diphosphate. Its function is as follows. DNA-dependent RNA polymerase catalyzes the transcription of DNA into RNA using the four ribonucleoside triphosphates as substrates. This is DNA-directed RNA polymerase subunit beta from Teredinibacter turnerae (strain ATCC 39867 / T7901).